The primary structure comprises 324 residues: PDZ domain-containing protein MAGIX (324 aa).

Residues 1-26 (MDSRAGNTADPRGGRRGGGLQGSRSP) form a disordered region. The PDZ domain occupies 128–212 (SVELTRGPAG…HLCLVLQRPQ (85 aa)). A compositionally biased stretch (basic and acidic residues) spans 216 to 241 (GSRIKEVGGHRKTDRSLDPRGSRVES). Residues 216–263 (GSRIKEVGGHRKTDRSLDPRGSRVESRSTISPVHHRPKTRTSPRPSPE) are disordered. Ser-261 bears the Phosphoserine mark.

In Mus musculus (Mouse), this protein is PDZ domain-containing protein MAGIX (Magix).